The primary structure comprises 168 residues: Putative flavin-containing monooxygenase FMO GS-OX-like 11 (168 aa).

17–22 contacts FAD; it reads GAGAAG.

The protein belongs to the FMO family. FAD is required as a cofactor.

Functionally, catalyzes the conversion of methylthioalkyl glucosinolates of any chain length into methylsulfinylalkyl glucosinolates. The sequence is that of Putative flavin-containing monooxygenase FMO GS-OX-like 11 from Arabidopsis thaliana (Mouse-ear cress).